The following is a 259-amino-acid chain: Gem-associated protein 2 (259 aa).

The protein belongs to the gemin-2 family. In terms of assembly, forms a stable heteromeric complex with survival of motor neuron protein (SMN), GEMIN3 and GEMIN4. The SMN complex is associated with the spliceosomal snRNAs U1 and U5 in the cytoplasm of oocytes.

It is found in the nucleus. Its subcellular location is the gem. It localises to the cytoplasm. Functionally, the SMN complex catalyzes the assembly of small nuclear ribonucleoproteins (snRNPs), the building blocks of the spliceosome, and thereby plays an important role in the splicing of cellular pre-mRNAs. Most spliceosomal snRNPs contain a common set of Sm proteins SNRPB, SNRPD1, SNRPD2, SNRPD3, SNRPE, SNRPF and SNRPG that assemble in a heptameric protein ring on the Sm site of the small nuclear RNA to form the core snRNP (Sm core). In the cytosol, the Sm proteins SNRPD1, SNRPD2, SNRPE, SNRPF and SNRPG (5Sm) are trapped in an inactive 6S pICln-Sm complex by the chaperone CLNS1A that controls the assembly of the core snRNP. To assemble core snRNPs, the SMN complex accepts the trapped 5Sm proteins from CLNS1A. Binding of snRNA inside 5Sm ultimately triggers eviction of the SMN complex, thereby allowing binding of SNRPD3 and SNRPB to complete assembly of the core snRNP. Within the SMN complex, GEMIN2 constrains the conformation of 5Sm, thereby promoting 5Sm binding to snRNA containing the snRNP code (a nonameric Sm site and a 3'-adjacent stem-loop), thus preventing progression of assembly until a cognate substrate is bound. This is Gem-associated protein 2 (gemin2) from Xenopus laevis (African clawed frog).